We begin with the raw amino-acid sequence, 303 residues long: MLVMLQFSKYQGLGNDFLLIDGREDQLTQQVINPDPAWVRKICDRHFGIGADGLILALPPRADGDLRMQIFNADGSLAEMCGNGIRCLTRFLADIEGDLCVQRWNIETLAGIICPVLQEDGQICVDMGTPFLDPESIPTTLTIGSAGLPQGECHLGSTSLHVAAVGMGNPHLIVPVEDLENIPFENWGQRLEKHHAFPAKTNVHFLKIHSPNQLEIRVWERGSGPTLACGTGACASLVATCLLGLSDDHAEVLLPGGVLQISWPGRRGSVFMTGPAEPIFDGVLTPLLSPSHAEVLPQDDQII.

Positions 15 and 72 each coordinate substrate. The Proton donor role is filled by Cys81. Substrate is bound by residues 82 to 83 (GN), Asn169, Asn202, and 220 to 221 (ER). The active-site Proton acceptor is Cys229. 230–231 (GT) serves as a coordination point for substrate.

Belongs to the diaminopimelate epimerase family. As to quaternary structure, homodimer.

It is found in the cytoplasm. The catalysed reaction is (2S,6S)-2,6-diaminopimelate = meso-2,6-diaminopimelate. The protein operates within amino-acid biosynthesis; L-lysine biosynthesis via DAP pathway; DL-2,6-diaminopimelate from LL-2,6-diaminopimelate: step 1/1. Its function is as follows. Catalyzes the stereoinversion of LL-2,6-diaminopimelate (L,L-DAP) to meso-diaminopimelate (meso-DAP), a precursor of L-lysine and an essential component of the bacterial peptidoglycan. The sequence is that of Diaminopimelate epimerase from Prochlorococcus marinus (strain MIT 9313).